Consider the following 166-residue polypeptide: Putative universal stress protein SE_1385 (166 aa).

This sequence belongs to the universal stress protein A family.

It localises to the cytoplasm. This is Putative universal stress protein SE_1385 from Staphylococcus epidermidis (strain ATCC 12228 / FDA PCI 1200).